Consider the following 243-residue polypeptide: R-spondin-2 (243 aa).

A signal peptide spans 1–21; the sequence is MQFQLFSFALIILNCVDYSHC. 11 disulfides stabilise this stretch: Cys-40–Cys-46, Cys-43–Cys-52, Cys-55–Cys-74, Cys-78–Cys-93, Cys-96–Cys-104, Cys-101–Cys-110, Cys-113–Cys-124, Cys-128–Cys-141, Cys-145–Cys-187, Cys-156–Cys-163, and Cys-196–Cys-203. An FU repeat occupies 90–134; it reads MNRCSRCRIENCDSCFSRDFCIKCKSGFYSLKGQCFEECPEGFAP. Positions 144–204 constitute a TSP type-1 domain; sequence GCEVGPWSEW…RCKMAIRHCP (61 aa). A glycan (N-linked (GlcNAc...) asparagine) is linked at Asn-160. Over residues 204 to 224 the composition is skewed to basic residues; the sequence is PGGKRTTKKKDKRNKKKKKKL. The tract at residues 204–243 is disordered; it reads PGGKRTTKKKDKRNKKKKKKLLERAQEQHSVVLATDRSSQ.

This sequence belongs to the R-spondin family. In terms of assembly, binds heparin.

It localises to the secreted. In terms of biological role, activator of the canonical Wnt signaling pathway by acting as a ligand for lgr4-6 receptors. Upon binding to lgr4-6 (lgr4, lgr5 or lgr6), lgr4-6 associate with phosphorylated lrp6 and frizzled receptors that are activated by extracellular Wnt receptors, triggering the canonical Wnt signaling pathway to increase expression of target genes. Acts both in the canonical Wnt/beta-catenin-dependent pathway and in non-canonical Wnt signaling pathway. Activates neural markers and promotes muscle formation. Overexpression blocks activin, nodal and BMP4 signaling, suggesting that it may negatively regulate the TGF-beta pathway. During embryonic development, plays a crucial role in limb specification, amplifying the Wnt signaling pathway independently of LGR4-6 receptors, possibly by acting as a direct antagonistic ligand to RNF43 and ZNRF3, hence governing the number of limbs an embryo should form. The protein is R-spondin-2 (rspo2) of Xenopus laevis (African clawed frog).